A 322-amino-acid chain; its full sequence is tRNA uridine(34) hydroxylase (322 aa).

The 95-residue stretch at 125–219 folds into the Rhodanese domain; sequence QDPDTIVIDA…YGKDPEVKGQ (95 aa). Residue cysteine 179 is the Cysteine persulfide intermediate of the active site.

It belongs to the TrhO family.

The enzyme catalyses uridine(34) in tRNA + AH2 + O2 = 5-hydroxyuridine(34) in tRNA + A + H2O. In terms of biological role, catalyzes oxygen-dependent 5-hydroxyuridine (ho5U) modification at position 34 in tRNAs. The protein is tRNA uridine(34) hydroxylase of Bacillus velezensis (strain DSM 23117 / BGSC 10A6 / LMG 26770 / FZB42) (Bacillus amyloliquefaciens subsp. plantarum).